Here is a 599-residue protein sequence, read N- to C-terminus: Elongation factor 4 (599 aa).

The region spanning 2–184 (KNIRNFSIIA…RLVRDIPPPE (183 aa)) is the tr-type G domain. GTP-binding positions include 14 to 19 (DHGKST) and 131 to 134 (NKID).

This sequence belongs to the TRAFAC class translation factor GTPase superfamily. Classic translation factor GTPase family. LepA subfamily.

The protein resides in the cell inner membrane. The enzyme catalyses GTP + H2O = GDP + phosphate + H(+). In terms of biological role, required for accurate and efficient protein synthesis under certain stress conditions. May act as a fidelity factor of the translation reaction, by catalyzing a one-codon backward translocation of tRNAs on improperly translocated ribosomes. Back-translocation proceeds from a post-translocation (POST) complex to a pre-translocation (PRE) complex, thus giving elongation factor G a second chance to translocate the tRNAs correctly. Binds to ribosomes in a GTP-dependent manner. This Cronobacter sakazakii (strain ATCC BAA-894) (Enterobacter sakazakii) protein is Elongation factor 4.